The sequence spans 236 residues: Ribitol-5-phosphate cytidylyltransferase (236 aa).

CTP-binding positions include 7–10 and 80–86; these read LAGG and GTDRNET.

The protein belongs to the IspD/TarI cytidylyltransferase family. TarI subfamily.

The enzyme catalyses D-ribitol 5-phosphate + CTP + H(+) = CDP-L-ribitol + diphosphate. Its pathway is cell wall biogenesis; poly(ribitol phosphate) teichoic acid biosynthesis. Its function is as follows. Catalyzes the transfer of the cytidylyl group of CTP to D-ribitol 5-phosphate. The sequence is that of Ribitol-5-phosphate cytidylyltransferase from Listeria monocytogenes serovar 1/2a (strain ATCC BAA-679 / EGD-e).